The sequence spans 720 residues: Catalase-peroxidase (720 aa).

Residues Met1–Ala21 form the signal peptide. The segment at residues Trp94–Tyr222 is a cross-link (tryptophyl-tyrosyl-methioninium (Trp-Tyr) (with M-248)). His95 functions as the Proton acceptor in the catalytic mechanism. The tryptophyl-tyrosyl-methioninium (Tyr-Met) (with W-94) cross-link spans Tyr222–Met248. Residue His263 coordinates heme b.

The protein belongs to the peroxidase family. Peroxidase/catalase subfamily. In terms of assembly, homodimer or homotetramer. Heme b is required as a cofactor. In terms of processing, formation of the three residue Trp-Tyr-Met cross-link is important for the catalase, but not the peroxidase activity of the enzyme.

It catalyses the reaction H2O2 + AH2 = A + 2 H2O. The catalysed reaction is 2 H2O2 = O2 + 2 H2O. Functionally, bifunctional enzyme with both catalase and broad-spectrum peroxidase activity. This Shewanella denitrificans (strain OS217 / ATCC BAA-1090 / DSM 15013) protein is Catalase-peroxidase.